Here is a 413-residue protein sequence, read N- to C-terminus: Transcription factor bHLH23 (413 aa).

Residues 40–75 are disordered; it reads SSQTQTPSCDPPLILRGSGSGDGEGNGPLPQPPPPL. A Phosphothreonine modification is found at Thr186. The residue at position 191 (Ser191) is a Phosphoserine. Disordered stretches follow at residues 232–278 and 391–413; these read TEPV…RSRA and ETEQ…KMFS. Residues 246–257 show a composition bias toward basic and acidic residues; the sequence is TDERKRKTREET. One can recognise a bHLH domain in the interval 277-326; sequence RAAIMHKLSERRRRQKINEMMKALQELLPRCTKTDRSSMLDDVIEYVKSL.

As to quaternary structure, homodimer. In terms of tissue distribution, expressed constitutively in leaves, stems, and flowers.

The protein resides in the nucleus. The protein is Transcription factor bHLH23 (BHLH23) of Arabidopsis thaliana (Mouse-ear cress).